Consider the following 352-residue polypeptide: Forkhead box protein D5 (352 aa).

2 disordered regions span residues 1–32 (MSLS…LGED) and 47–92 (HSEM…GKAK). A compositionally biased stretch (acidic residues) spans 20–32 (SDEEDEIDILGED). A compositionally biased stretch (low complexity) spans 73-82 (ESEGGTSKDS). The segment at residues 97 to 191 (KPPYSYIALI…DNGSFLRRRK (95 aa)) is a DNA-binding region (fork-head).

Expression begins in the newly forming dorsal mesoderm and is maintained during gastrulation at the dorsal blastopore lip (Spemann organizer). At the early neurula stages, expressed in a row of cells along the dorsal midline that are destined to become the fllor plate of the neural tube. At late neurula, expressed within the anterior and posterior poles of the embryo. After neural closure, expression is detected only in the tailtip, the otic vesicle and at the midbrain/hindbrain boundary.

The protein resides in the nucleus. Functionally, transcriptional repressor. The chain is Forkhead box protein D5 from Xenopus tropicalis (Western clawed frog).